The sequence spans 341 residues: ATPase GET3 (341 aa).

34 to 41 is an ATP binding site; that stretch reads KGGVGKTT. The active site involves Asp-63. Residues Glu-245 and Asn-272 each coordinate ATP. Cys-283 and Cys-286 together coordinate Zn(2+).

Belongs to the arsA ATPase family. Homodimer.

Its subcellular location is the cytoplasm. It is found in the endoplasmic reticulum. Functionally, ATPase required for the post-translational delivery of tail-anchored (TA) proteins to the endoplasmic reticulum. Recognizes and selectively binds the transmembrane domain of TA proteins in the cytosol. This complex then targets to the endoplasmic reticulum by membrane-bound receptors, where the tail-anchored protein is released for insertion. This process is regulated by ATP binding and hydrolysis. ATP binding drives the homodimer towards the closed dimer state, facilitating recognition of newly synthesized TA membrane proteins. ATP hydrolysis is required for insertion. Subsequently, the homodimer reverts towards the open dimer state, lowering its affinity for the membrane-bound receptor, and returning it to the cytosol to initiate a new round of targeting. The chain is ATPase GET3 from Paracoccidioides lutzii (strain ATCC MYA-826 / Pb01) (Paracoccidioides brasiliensis).